An 848-amino-acid chain; its full sequence is DNA mismatch repair protein MutS (848 aa).

605-612 (GPNMAGKS) provides a ligand contact to ATP.

This sequence belongs to the DNA mismatch repair MutS family.

Functionally, this protein is involved in the repair of mismatches in DNA. It is possible that it carries out the mismatch recognition step. This protein has a weak ATPase activity. The protein is DNA mismatch repair protein MutS of Leptospira interrogans serogroup Icterohaemorrhagiae serovar Lai (strain 56601).